A 447-amino-acid polypeptide reads, in one-letter code: Trigger factor (447 aa).

In terms of domain architecture, PPIase FKBP-type spans 159-244 (GDMLLMQVES…VREIKEEKLP (86 aa)).

The protein belongs to the FKBP-type PPIase family. Tig subfamily.

It localises to the cytoplasm. It carries out the reaction [protein]-peptidylproline (omega=180) = [protein]-peptidylproline (omega=0). Involved in protein export. Acts as a chaperone by maintaining the newly synthesized protein in an open conformation. Functions as a peptidyl-prolyl cis-trans isomerase. This Dehalococcoides mccartyi (strain ATCC BAA-2100 / JCM 16839 / KCTC 5957 / BAV1) protein is Trigger factor.